The following is an 83-amino-acid chain: Putative beta-neurotoxin RjAa12f (83 aa).

An N-terminal signal peptide occupies residues 1–18 (MKILIFIIASFMLIGVEC). The LCN-type CS-alpha/beta domain maps to 19–82 (KEGYPMGRDG…VWDSSTNKCG (64 aa)). 4 cysteine pairs are disulfide-bonded: C29–C81, C33–C55, C40–C62, and C44–C64. G83 is a propeptide.

Contains 4 disulfide bonds. Expressed by the venom gland.

It is found in the secreted. Its function is as follows. Beta toxins bind voltage-independently at site-4 of sodium channels (Nav) and shift the voltage of activation toward more negative potentials thereby affecting sodium channel activation and promoting spontaneous and repetitive firing. This toxin is lethal to insects (A.domestica). It is not toxic to mice and does not affect mammal F11 sodium channels. The sequence is that of Putative beta-neurotoxin RjAa12f from Rhopalurus junceus (Caribbean blue scorpion).